We begin with the raw amino-acid sequence, 357 residues long: UDP-N-acetylglucosamine--N-acetylmuramyl-(pentapeptide) pyrophosphoryl-undecaprenol N-acetylglucosamine transferase (357 aa).

Residues 13 to 15, N125, R161, S189, I243, and Q288 contribute to the UDP-N-acetyl-alpha-D-glucosamine site; that span reads TGG.

The protein belongs to the glycosyltransferase 28 family. MurG subfamily.

The protein localises to the cell inner membrane. The catalysed reaction is di-trans,octa-cis-undecaprenyl diphospho-N-acetyl-alpha-D-muramoyl-L-alanyl-D-glutamyl-meso-2,6-diaminopimeloyl-D-alanyl-D-alanine + UDP-N-acetyl-alpha-D-glucosamine = di-trans,octa-cis-undecaprenyl diphospho-[N-acetyl-alpha-D-glucosaminyl-(1-&gt;4)]-N-acetyl-alpha-D-muramoyl-L-alanyl-D-glutamyl-meso-2,6-diaminopimeloyl-D-alanyl-D-alanine + UDP + H(+). The protein operates within cell wall biogenesis; peptidoglycan biosynthesis. Its function is as follows. Cell wall formation. Catalyzes the transfer of a GlcNAc subunit on undecaprenyl-pyrophosphoryl-MurNAc-pentapeptide (lipid intermediate I) to form undecaprenyl-pyrophosphoryl-MurNAc-(pentapeptide)GlcNAc (lipid intermediate II). This Bordetella pertussis (strain Tohama I / ATCC BAA-589 / NCTC 13251) protein is UDP-N-acetylglucosamine--N-acetylmuramyl-(pentapeptide) pyrophosphoryl-undecaprenol N-acetylglucosamine transferase.